The following is a 377-amino-acid chain: Adaptive-response sensory kinase SasA (377 aa).

Positions 154-373 (MLVHDLRSPL…SFHFTLPVYR (220 aa)) constitute a Histidine kinase domain. Residue histidine 157 is modified to Phosphohistidine; by autocatalysis.

In terms of assembly, homooligomerizes. Interacts with KaiC. Participates in the KaiABC clock complex, whose core is composed of a KaiC homohexamer, 6 KaiB and up to 6 KaiA dimers. SasA and KaiB(fs) compete to bind to KaiC.

The enzyme catalyses ATP + protein L-histidine = ADP + protein N-phospho-L-histidine.. Its function is as follows. Member of the two-component regulatory system SasA/RpaA involved in genome-wide circadian gene expression. One of several clock output pathways. Participates in the Kai clock protein complex, the main circadian regulator in cyanobacteria, via its interaction with KaiC. KaiC enhances the autophosphorylation activity of SasA, which then transfers its phosphate group to RpaA to activate it. In addition to its output function, recruits fold-shifted KaiB (KaiB(fs)) to KaiC to cooperatively form the KaiB(6):KaiC(6) complex (independent of SasA kinase activity). Required for robustness of the circadian rhythm of gene expression and is involved in clock output, also required for adaptation to light/dark cycles. This chain is Adaptive-response sensory kinase SasA, found in Synechococcus sp. (strain JA-2-3B'a(2-13)) (Cyanobacteria bacterium Yellowstone B-Prime).